Consider the following 118-residue polypeptide: Telomere bouquet protein 2 (118 aa).

As to quaternary structure, interacts with bqt1. The bqt1-bqt2-sad1 complex binds rap1.

The protein localises to the cytoplasm. It localises to the nucleus. Its subcellular location is the cytoskeleton. It is found in the microtubule organizing center. The protein resides in the spindle pole body. The protein localises to the chromosome. It localises to the telomere. Involved in chromosome segregation. During meiotic prophase, connects telomeres to the spindle pole body by forming a bridge between the telomere protein rap1 and the spindle pole body protein sad1. The polypeptide is Telomere bouquet protein 2 (bqt2) (Schizosaccharomyces pombe (strain 972 / ATCC 24843) (Fission yeast)).